Reading from the N-terminus, the 345-residue chain is Dihydroorotate dehydrogenase (quinone) (345 aa).

FMN-binding positions include 65-69 (AGLDK) and T89. K69 serves as a coordination point for substrate. 114 to 118 (NRLGF) contacts substrate. FMN is bound by residues N146 and N179. N179 is a binding site for substrate. S182 acts as the Nucleophile in catalysis. Residue N184 coordinates substrate. Residues K224 and T252 each contribute to the FMN site. 253-254 (NT) provides a ligand contact to substrate. FMN-binding positions include G275, G304, and 325-326 (YT).

This sequence belongs to the dihydroorotate dehydrogenase family. Type 2 subfamily. In terms of assembly, monomer. It depends on FMN as a cofactor.

Its subcellular location is the cell membrane. The enzyme catalyses (S)-dihydroorotate + a quinone = orotate + a quinol. The protein operates within pyrimidine metabolism; UMP biosynthesis via de novo pathway; orotate from (S)-dihydroorotate (quinone route): step 1/1. Functionally, catalyzes the conversion of dihydroorotate to orotate with quinone as electron acceptor. The chain is Dihydroorotate dehydrogenase (quinone) from Leptothrix cholodnii (strain ATCC 51168 / LMG 8142 / SP-6) (Leptothrix discophora (strain SP-6)).